The following is a 195-amino-acid chain: Peptidyl-tRNA hydrolase (195 aa).

Tyr-17 lines the tRNA pocket. The active-site Proton acceptor is His-22. TRNA is bound by residues Phe-68, Asn-70, and Asn-116.

The protein belongs to the PTH family. As to quaternary structure, monomer.

It localises to the cytoplasm. It carries out the reaction an N-acyl-L-alpha-aminoacyl-tRNA + H2O = an N-acyl-L-amino acid + a tRNA + H(+). In terms of biological role, hydrolyzes ribosome-free peptidyl-tRNAs (with 1 or more amino acids incorporated), which drop off the ribosome during protein synthesis, or as a result of ribosome stalling. Functionally, catalyzes the release of premature peptidyl moieties from peptidyl-tRNA molecules trapped in stalled 50S ribosomal subunits, and thus maintains levels of free tRNAs and 50S ribosomes. This Pectobacterium carotovorum subsp. carotovorum (strain PC1) protein is Peptidyl-tRNA hydrolase.